A 244-amino-acid chain; its full sequence is Electron transfer flavoprotein beta subunit lysine methyltransferase homolog (244 aa).

Belongs to the methyltransferase superfamily. ETFBKMT family.

Its function is as follows. Probable methyltransferase. The protein is Electron transfer flavoprotein beta subunit lysine methyltransferase homolog of Caenorhabditis elegans.